Reading from the N-terminus, the 1441-residue chain is uncharacterized protein (1441 aa).

13 disordered regions span residues 1–95, 150–204, 224–289, 401–477, 529–661, 680–760, 776–810, 849–899, 980–1118, 1161–1185, 1209–1321, 1348–1402, and 1421–1441; these read MGFL…EVIS, NGGI…QQQF, KPHQ…GEGE, HSNG…QLHQ, RHES…QPQQ, LNKD…KSQT, RKSS…HIQQ, QQQF…TQQL, RGGS…DNNN, KSLK…NENN, NIES…YRSY, GHNS…HIFF, and LKFN…SILE. Residues 19 to 38 show a composition bias toward low complexity; it reads NDNSFDGGSSSYNNNNNNNN. The span at 39-56 shows a compositional bias: polar residues; that stretch reads QPITYTPTAIRSPNNKTM. Low complexity-rich tracts occupy residues 57-91, 153-187, 227-283, 416-445, 555-564, and 572-635; these read SQSQ…GNGN, ISQP…TTTP, QQQQ…SLQN, NNNN…GINN, GNTDGVNIDN, and NNNN…TNNT. Residues 636 to 645 are compositionally biased toward polar residues; sequence ATPSVINGDS. Low complexity-rich tracts occupy residues 648–661 and 680–700; these read QEQP…QPQQ and LNKD…DDNN. Residues 703 to 720 are compositionally biased toward basic and acidic residues; it reads SREEMENILKKSQQDSNK. The span at 729–751 shows a compositional bias: polar residues; that stretch reads EDSNSGSPTFQDFQSSAAASNVS. Composition is skewed to low complexity over residues 780–810 and 849–880; these read DSLN…HIQQ and QQQF…NSGS. Gly residues predominate over residues 881-892; that stretch reads INGGSNSGGGGV. A compositionally biased stretch (polar residues) spans 981-994; that stretch reads GGSTNRTTPPFLTP. A compositionally biased stretch (low complexity) spans 995–1067; it reads NTSQTNLSSL…NKQTANNTTN (73 aa). Residues 1068–1087 are compositionally biased toward polar residues; it reads DFSFDQNTDLRSSTNSLTIG. Over residues 1088-1118 the composition is skewed to low complexity; the sequence is SNSNFSSLKNSLNLENPENNNNPDKNVDNNN. Composition is skewed to low complexity over residues 1225-1249 and 1257-1291; these read DNNN…SLRN and NISN…NNNE. The span at 1362–1373 shows a compositional bias: basic and acidic residues; sequence RHKDSIGDKEMD.

This is an uncharacterized protein from Dictyostelium discoideum (Social amoeba).